Reading from the N-terminus, the 446-residue chain is N-succinylarginine dihydrolase (446 aa).

Substrate contacts are provided by residues 19 to 28 (AGLSFGNVAS), N110, and 137 to 138 (HR). E174 is a catalytic residue. Residue R213 participates in substrate binding. H249 is a catalytic residue. 2 residues coordinate substrate: D251 and N364. The active-site Nucleophile is the C370.

It belongs to the succinylarginine dihydrolase family. In terms of assembly, homodimer.

It catalyses the reaction N(2)-succinyl-L-arginine + 2 H2O + 2 H(+) = N(2)-succinyl-L-ornithine + 2 NH4(+) + CO2. Its pathway is amino-acid degradation; L-arginine degradation via AST pathway; L-glutamate and succinate from L-arginine: step 2/5. In terms of biological role, catalyzes the hydrolysis of N(2)-succinylarginine into N(2)-succinylornithine, ammonia and CO(2). This Burkholderia cenocepacia (strain ATCC BAA-245 / DSM 16553 / LMG 16656 / NCTC 13227 / J2315 / CF5610) (Burkholderia cepacia (strain J2315)) protein is N-succinylarginine dihydrolase.